The chain runs to 245 residues: tRNA1(Val) (adenine(37)-N6)-methyltransferase (245 aa).

The protein belongs to the methyltransferase superfamily. tRNA (adenine-N(6)-)-methyltransferase family.

It is found in the cytoplasm. It catalyses the reaction adenosine(37) in tRNA1(Val) + S-adenosyl-L-methionine = N(6)-methyladenosine(37) in tRNA1(Val) + S-adenosyl-L-homocysteine + H(+). Functionally, specifically methylates the adenine in position 37 of tRNA(1)(Val) (anticodon cmo5UAC). The polypeptide is tRNA1(Val) (adenine(37)-N6)-methyltransferase (Escherichia coli O157:H7).